The primary structure comprises 230 residues: 2,3-bisphosphoglycerate-dependent phosphoglycerate mutase 1 (230 aa).

Residues 8–15 (RHGQSEWN), 21–22 (TG), R60, 87–90 (ERHY), K98, 114–115 (RR), and 183–184 (GN) contribute to the substrate site. Residue H9 is the Tele-phosphohistidine intermediate of the active site. E87 acts as the Proton donor/acceptor in catalysis.

The protein belongs to the phosphoglycerate mutase family. BPG-dependent PGAM subfamily.

The enzyme catalyses (2R)-2-phosphoglycerate = (2R)-3-phosphoglycerate. It functions in the pathway carbohydrate degradation; glycolysis; pyruvate from D-glyceraldehyde 3-phosphate: step 3/5. Its function is as follows. Catalyzes the interconversion of 2-phosphoglycerate and 3-phosphoglycerate. The polypeptide is 2,3-bisphosphoglycerate-dependent phosphoglycerate mutase 1 (Lactobacillus johnsonii (strain CNCM I-12250 / La1 / NCC 533)).